A 97-amino-acid chain; its full sequence is Aspartyl/glutamyl-tRNA(Asn/Gln) amidotransferase subunit C (97 aa).

Belongs to the GatC family. In terms of assembly, heterotrimer of A, B and C subunits.

The catalysed reaction is L-glutamyl-tRNA(Gln) + L-glutamine + ATP + H2O = L-glutaminyl-tRNA(Gln) + L-glutamate + ADP + phosphate + H(+). It carries out the reaction L-aspartyl-tRNA(Asn) + L-glutamine + ATP + H2O = L-asparaginyl-tRNA(Asn) + L-glutamate + ADP + phosphate + 2 H(+). Its function is as follows. Allows the formation of correctly charged Asn-tRNA(Asn) or Gln-tRNA(Gln) through the transamidation of misacylated Asp-tRNA(Asn) or Glu-tRNA(Gln) in organisms which lack either or both of asparaginyl-tRNA or glutaminyl-tRNA synthetases. The reaction takes place in the presence of glutamine and ATP through an activated phospho-Asp-tRNA(Asn) or phospho-Glu-tRNA(Gln). The polypeptide is Aspartyl/glutamyl-tRNA(Asn/Gln) amidotransferase subunit C (Listeria welshimeri serovar 6b (strain ATCC 35897 / DSM 20650 / CCUG 15529 / CIP 8149 / NCTC 11857 / SLCC 5334 / V8)).